The chain runs to 254 residues: Imidazole glycerol phosphate synthase subunit HisF (254 aa).

Catalysis depends on residues Asp13 and Asp132.

This sequence belongs to the HisA/HisF family. Heterodimer of HisH and HisF.

Its subcellular location is the cytoplasm. The enzyme catalyses 5-[(5-phospho-1-deoxy-D-ribulos-1-ylimino)methylamino]-1-(5-phospho-beta-D-ribosyl)imidazole-4-carboxamide + L-glutamine = D-erythro-1-(imidazol-4-yl)glycerol 3-phosphate + 5-amino-1-(5-phospho-beta-D-ribosyl)imidazole-4-carboxamide + L-glutamate + H(+). It participates in amino-acid biosynthesis; L-histidine biosynthesis; L-histidine from 5-phospho-alpha-D-ribose 1-diphosphate: step 5/9. In terms of biological role, IGPS catalyzes the conversion of PRFAR and glutamine to IGP, AICAR and glutamate. The HisF subunit catalyzes the cyclization activity that produces IGP and AICAR from PRFAR using the ammonia provided by the HisH subunit. This is Imidazole glycerol phosphate synthase subunit HisF from Sulfurovum sp. (strain NBC37-1).